Reading from the N-terminus, the 363-residue chain is Inositol-3-phosphate synthase (363 aa).

An Isoglutamyl lysine isopeptide (Lys-Gln) (interchain with Q-Cter in protein Pup) cross-link involves residue K65. NAD(+) contacts are provided by D70, A129, Y149, S192, D227, and K240.

The protein belongs to the myo-inositol 1-phosphate synthase family. NAD(+) serves as cofactor. Post-translationally, pupylated at Lys-65 by the prokaryotic ubiquitin-like protein Pup, which leads to its degradation by the proteasome.

The enzyme catalyses D-glucose 6-phosphate = 1D-myo-inositol 3-phosphate. Functionally, key enzyme in myo-inositol biosynthesis pathway that catalyzes the conversion of glucose 6-phosphate to 1D-myo-inositol 3-phosphate in a NAD-dependent manner. In Mycolicibacterium smegmatis (strain ATCC 700084 / mc(2)155) (Mycobacterium smegmatis), this protein is Inositol-3-phosphate synthase (ino1).